The primary structure comprises 318 residues: NADH-ubiquinone oxidoreductase chain 1 (318 aa).

Transmembrane regions (helical) follow at residues 2-22, 69-89, 102-122, 146-166, 171-191, 231-251, 253-273, and 294-314; these read FMIN…FLTL, FMFT…WVPL, MLFI…SGWA, LAII…STLT, HLWL…STLA, IIMM…NPLL, EAHT…FLWV, and LPLT…LACI.

Belongs to the complex I subunit 1 family. As to quaternary structure, core subunit of respiratory chain NADH dehydrogenase (Complex I) which is composed of 45 different subunits.

The protein resides in the mitochondrion inner membrane. It catalyses the reaction a ubiquinone + NADH + 5 H(+)(in) = a ubiquinol + NAD(+) + 4 H(+)(out). In terms of biological role, core subunit of the mitochondrial membrane respiratory chain NADH dehydrogenase (Complex I) which catalyzes electron transfer from NADH through the respiratory chain, using ubiquinone as an electron acceptor. Essential for the catalytic activity and assembly of complex I. The polypeptide is NADH-ubiquinone oxidoreductase chain 1 (MT-ND1) (Dugong dugon (Dugong)).